Consider the following 349-residue polypeptide: sn-glycerol-3-phosphate import ATP-binding protein UgpC (349 aa).

An ABC transporter domain is found at 4–235; the sequence is ITLKDVHKTY…PATAFVATFI (232 aa). 37–44 serves as a coordination point for ATP; the sequence is GPSGCGKS.

This sequence belongs to the ABC transporter superfamily. sn-glycerol-3-phosphate importer (TC 3.A.1.1.3) family. In terms of assembly, the complex is composed of two ATP-binding proteins (UgpC), two transmembrane proteins (UgpA and UgpE) and a solute-binding protein (UgpB).

It localises to the cell inner membrane. It catalyses the reaction sn-glycerol 3-phosphate(out) + ATP + H2O = sn-glycerol 3-phosphate(in) + ADP + phosphate + H(+). Functionally, part of the ABC transporter complex UgpBAEC involved in sn-glycerol-3-phosphate (G3P) import. Responsible for energy coupling to the transport system. The protein is sn-glycerol-3-phosphate import ATP-binding protein UgpC of Rhizobium meliloti (strain 1021) (Ensifer meliloti).